Here is a 186-residue protein sequence, read N- to C-terminus: Orotate phosphoribosyltransferase (186 aa).

5-phospho-alpha-D-ribose 1-diphosphate is bound by residues Arg-96, Lys-100, His-102, and 121–129; that span reads DDVATTGTS. 2 residues coordinate orotate: Thr-125 and Arg-153.

The protein belongs to the purine/pyrimidine phosphoribosyltransferase family. PyrE subfamily. In terms of assembly, homodimer. Mg(2+) serves as cofactor.

The enzyme catalyses orotidine 5'-phosphate + diphosphate = orotate + 5-phospho-alpha-D-ribose 1-diphosphate. Its pathway is pyrimidine metabolism; UMP biosynthesis via de novo pathway; UMP from orotate: step 1/2. In terms of biological role, catalyzes the transfer of a ribosyl phosphate group from 5-phosphoribose 1-diphosphate to orotate, leading to the formation of orotidine monophosphate (OMP). The sequence is that of Orotate phosphoribosyltransferase from Aeropyrum pernix (strain ATCC 700893 / DSM 11879 / JCM 9820 / NBRC 100138 / K1).